The sequence spans 165 residues: NADPH-dependent 7-cyano-7-deazaguanine reductase (165 aa).

Residue cysteine 56 is the Thioimide intermediate of the active site. The active-site Proton donor is the aspartate 63. Substrate contacts are provided by residues 78 to 80 and 97 to 98; these read VES and HE.

It belongs to the GTP cyclohydrolase I family. QueF type 1 subfamily.

The protein resides in the cytoplasm. The catalysed reaction is 7-aminomethyl-7-carbaguanine + 2 NADP(+) = 7-cyano-7-deazaguanine + 2 NADPH + 3 H(+). The protein operates within tRNA modification; tRNA-queuosine biosynthesis. Its function is as follows. Catalyzes the NADPH-dependent reduction of 7-cyano-7-deazaguanine (preQ0) to 7-aminomethyl-7-deazaguanine (preQ1). The polypeptide is NADPH-dependent 7-cyano-7-deazaguanine reductase (Bacillus thuringiensis subsp. konkukian (strain 97-27)).